The sequence spans 365 residues: Phospho-N-acetylmuramoyl-pentapeptide-transferase (365 aa).

Transmembrane regions (helical) follow at residues 15–35, 39–59, 84–104, 114–134, 156–176, 178–198, 209–229, 235–255, 263–283, 291–311, and 343–363; these read WPAAILIGAVISAAFVADRLI, LLSLPLMAAILVSTLITWWGV, GTPTMGGLLVVPVGVIIGGLV, LLAIALVTLAYMVIGGVDDWS, AAVLFLGWAGWQGWIAGTVSL, FNLDLPLHWLIWPLALFVFLA, LDGLASGCGALVFTGLALQLM, GDPALAGFCMAMAGCWLGFLI, VFMGDTGSLAMGAALSAVALL, LLMGGVFLAESVSVIVQVWVF, and VVVPLFWLVTAGLVMLGLGLH.

It belongs to the glycosyltransferase 4 family. MraY subfamily. Mg(2+) serves as cofactor.

The protein localises to the cell inner membrane. The enzyme catalyses UDP-N-acetyl-alpha-D-muramoyl-L-alanyl-gamma-D-glutamyl-meso-2,6-diaminopimeloyl-D-alanyl-D-alanine + di-trans,octa-cis-undecaprenyl phosphate = di-trans,octa-cis-undecaprenyl diphospho-N-acetyl-alpha-D-muramoyl-L-alanyl-D-glutamyl-meso-2,6-diaminopimeloyl-D-alanyl-D-alanine + UMP. It participates in cell wall biogenesis; peptidoglycan biosynthesis. In terms of biological role, catalyzes the initial step of the lipid cycle reactions in the biosynthesis of the cell wall peptidoglycan: transfers peptidoglycan precursor phospho-MurNAc-pentapeptide from UDP-MurNAc-pentapeptide onto the lipid carrier undecaprenyl phosphate, yielding undecaprenyl-pyrophosphoryl-MurNAc-pentapeptide, known as lipid I. The protein is Phospho-N-acetylmuramoyl-pentapeptide-transferase of Synechococcus sp. (strain WH7803).